We begin with the raw amino-acid sequence, 500 residues long: Aldehyde dehydrogenase, mitochondrial (500 aa).

N6-acetyllysine is present on residues Lys35, Lys56, and Lys142. Residue 245 to 250 (GSTEVG) coordinates NAD(+). Glu268 functions as the Proton acceptor in the catalytic mechanism. The Nucleophile role is filled by Cys302. Residues Lys358, Lys366, Lys409, Lys411, Lys424, and Lys434 each carry the N6-acetyllysine modification.

This sequence belongs to the aldehyde dehydrogenase family. Homotetramer. In response to mitochondrial stress, the precursor protein is ubiquitinated by the SIFI complex in the cytoplasm before mitochondrial import, leading to its degradation. Within the SIFI complex, UBR4 initiates ubiquitin chain that are further elongated or branched by KCMF1.

The protein localises to the mitochondrion matrix. The catalysed reaction is an aldehyde + NAD(+) + H2O = a carboxylate + NADH + 2 H(+). Its pathway is alcohol metabolism; ethanol degradation; acetate from ethanol: step 2/2. Its function is as follows. Required for clearance of cellular formaldehyde, a cytotoxic and carcinogenic metabolite that induces DNA damage. The protein is Aldehyde dehydrogenase, mitochondrial (ALDH2) of Equus caballus (Horse).